Here is a 727-residue protein sequence, read N- to C-terminus: Glucans biosynthesis glucosyltransferase H (727 aa).

The segment at 17–41 (GSAMPNERPGPMEPQSLSQMPEGFP) is disordered. The next 6 helical transmembrane spans lie at 58 to 80 (FFVVGGALLLSSFAIYEMGAVFS), 95 to 117 (FAINFCWIALAFCSGIAGFLLLL), 407 to 429 (GIMAYLSSPFWLLLILTGLMLAL), 457 to 479 (ALRLFYITMVVLFGPKIFGVLLL), 499 to 521 (VLFEVILSALIAPIMMFIHCGAV), and 572 to 594 (LLAWMSPALIGLWLAVPISAWTG).

Belongs to the glycosyltransferase 2 family. OpgH subfamily.

The protein localises to the cell inner membrane. Its pathway is glycan metabolism; osmoregulated periplasmic glucan (OPG) biosynthesis. Functionally, involved in the biosynthesis of osmoregulated periplasmic glucans (OPGs). The protein is Glucans biosynthesis glucosyltransferase H of Shewanella oneidensis (strain ATCC 700550 / JCM 31522 / CIP 106686 / LMG 19005 / NCIMB 14063 / MR-1).